An 869-amino-acid polypeptide reads, in one-letter code: MTRTSETTKSPAPELLTQQQAIDSLGKYGYGWADSDVAGASARRGLSEDVVRDISAKKDEPEWMLQARLKALRVFERKPMPRWGSNLDGIDFDNIKYFVRSTEKQAASWDELPEDIRNTYDRLGIPDAEKQRLVAGVAAQYESEVVYHQIRADLKDQGVVFLDTETGLREYPDIFKQYLGTVIPAGDNKFSALNTAVWSGGCLTADARINVKGKGLVSIADVQPGDEVFGVNIGCELERGKVLAKVASGTKPVYEMHVAGRALEATGNHQFLVARRVEEGKRTRWTAVWAPLEEIESGEPIAVARVLPDDSGTIFFSESELDIKNRTRQCLYFPCQNSVDLLWLLGLWLGDGHTAAPHKHMRQVAFSVPAGDPVHHTAIRVVSEQFGANVTVVNCGFIVSSKAFETWLAELGFSGDEKTKRLPAWIYSLPHEHQLALIGGLVDADGWTESSGATMSIAFASRELLEDVRQLAIGCGLYPDGALVERTRSATCRDGRIVTSTSWRLRIQGSLDRVGTRTPGKRGKPVSNKGRRQRYVAAAGLNFSSLSTDTVGFARLKSKTLVGEKPTYDIQVVGLENFVANGIVAHNSFIYVPPGVHVDIPLQAYFRINTENMGQFERTLIIADTGSYVHYVEGCTAPIYKSDSLHSAVVEIIVKPHARVRYTTIQNWSNNVYNLVTKRARVETGATMEWIDGNIGSKVTMKYPAVWMTGEHAKGEVLSVAFAGEGQHQDTGAKMLHLASNTSSNIVSKSVARGGGRTSYRGLVQVNKGAHGSRSSVKCDALLVDTISRSDTYPYVDIREDDVTMGHEATVSKVSENQLFYLMSRGLAEDEAMAMVVRGFVEPIAKELPMEYALELNRLIELQMEGAVG.

Residues 344–477 form the DOD-type homing endonuclease domain; sequence LLGLWLGDGH…VRQLAIGCGL (134 aa).

Belongs to the iron-sulfur cluster assembly SufBD family. In terms of processing, this protein undergoes a protein self splicing that involves a post-translational excision of the intervening region (intein) followed by peptide ligation.

The sequence is that of Iron-sulfur cluster assembly SufBD family protein ML0593 from Mycobacterium leprae (strain TN).